Reading from the N-terminus, the 771-residue chain is Probable cation-transporting ATPase G (771 aa).

In terms of domain architecture, HMA spans 19–86; the sequence is GRMRVQATGF…AIIDAETVPA (68 aa). Residues 72-92 form a helical membrane-spanning segment; it reads AAILSAIIDAETVPAAAVPAY. The disordered stretch occupies residues 122-143; it reads DVAAQPSGETSDACCDGEDNED. 5 helical membrane-spanning segments follow: residues 163 to 183, 209 to 229, 330 to 350, 387 to 407, and 411 to 431; these read VLLT…VVLG, VGVG…GELG, VFAG…ATAA, MIAA…LVWI, and LVVL…VTVV. The 4-aspartylphosphate intermediate role is filled by aspartate 462. 2 residues coordinate Mg(2+): aspartate 651 and aspartate 655. Transmembrane regions (helical) follow at residues 657-677 and 716-736; these read PALA…DVAI and IITV…AVVL.

The protein belongs to the cation transport ATPase (P-type) (TC 3.A.3) family. Type IB subfamily.

The protein resides in the cell membrane. The enzyme catalyses ATP + H2O = ADP + phosphate + H(+). This chain is Probable cation-transporting ATPase G (ctpG), found in Mycobacterium bovis (strain ATCC BAA-935 / AF2122/97).